Consider the following 177-residue polypeptide: Probetacellulin (177 aa).

Positions 1–31 (MDPTAPGSSVSSLPLLLVLALGLAILHCVVA) are cleaved as a signal peptide. Residues 32–118 (DGNTTRTPET…LFYLQQDRGQ (87 aa)) lie on the Extracellular side of the membrane. 3 N-linked (GlcNAc...) asparagine glycosylation sites follow: Asn34, Asn42, and Asn52. The EGF-like domain maps to 65-105 (HFSRCPKQYKHYCIHGRCRFVVDEQTPSCICEKGYFGARCE). 3 disulfides stabilise this stretch: Cys69/Cys82, Cys77/Cys93, and Cys95/Cys104. A propeptide spans 112–177 (LQQDRGQILV…SEDIQETNIA (66 aa)) (removed in mature form). Residues 119-139 (ILVVCLIVVMVVFIILVIGVC) form a helical membrane-spanning segment. Residues 140 to 177 (TCCHPLRKHRKKKKEEKMETLDKDKTPISEDIQETNIA) lie on the Cytoplasmic side of the membrane. The tract at residues 153–177 (KEEKMETLDKDKTPISEDIQETNIA) is disordered. Over residues 154–167 (EEKMETLDKDKTPI) the composition is skewed to basic and acidic residues.

As to quaternary structure, monomer. Interacts with EGFR and ERBB4. As to expression, found in several mouse tissues including kidney, uterus and liver, as well as in beta tumor cell line and MCF-7 cells. It is not detected in the brain.

It localises to the secreted. It is found in the extracellular space. The protein resides in the cell membrane. Functionally, growth factor that binds to EGFR, ERBB4 and other EGF receptor family members. Potent mitogen for retinal pigment epithelial cells and vascular smooth muscle cells. The polypeptide is Probetacellulin (Btc) (Mus musculus (Mouse)).